Here is a 472-residue protein sequence, read N- to C-terminus: Cysteine--tRNA ligase (472 aa).

Position 27 (Cys27) interacts with Zn(2+). A 'HIGH' region motif is present at residues 29 to 39 (PTVYNLIHIGN). Positions 214, 239, and 243 each coordinate Zn(2+). A 'KMSKS' region motif is present at residues 271-275 (KMSKS). An ATP-binding site is contributed by Lys274.

Belongs to the class-I aminoacyl-tRNA synthetase family. Monomer. The cofactor is Zn(2+).

The protein resides in the cytoplasm. It catalyses the reaction tRNA(Cys) + L-cysteine + ATP = L-cysteinyl-tRNA(Cys) + AMP + diphosphate. The chain is Cysteine--tRNA ligase from Lachnospira eligens (strain ATCC 27750 / DSM 3376 / VPI C15-48 / C15-B4) (Eubacterium eligens).